Reading from the N-terminus, the 437-residue chain is GTPase Obg (437 aa).

The Obg domain occupies 2-160; that stretch reads SLFLDTARIE…KILLLELRVL (159 aa). The 178-residue stretch at 161–338 folds into the OBG-type G domain; that stretch reads ADVGLVGFPS…LLARTSELLA (178 aa). Residues 167–174, 192–196, 214–217, 284–287, and 319–321 each bind GTP; these read GFPSVGKS, FTTIT, DMPG, NKMD, and SGL. Mg(2+)-binding residues include S174 and T194. The region spanning 359–437 is the OCT domain; it reads GFEEEEKPFK…IQKFEFEFVD (79 aa).

Belongs to the TRAFAC class OBG-HflX-like GTPase superfamily. OBG GTPase family. In terms of assembly, monomer. It depends on Mg(2+) as a cofactor.

It is found in the cytoplasm. In terms of biological role, an essential GTPase which binds GTP, GDP and possibly (p)ppGpp with moderate affinity, with high nucleotide exchange rates and a fairly low GTP hydrolysis rate. Plays a role in control of the cell cycle, stress response, ribosome biogenesis and in those bacteria that undergo differentiation, in morphogenesis control. This is GTPase Obg from Lactococcus lactis subsp. lactis (strain IL1403) (Streptococcus lactis).